A 368-amino-acid chain; its full sequence is uncharacterized protein (368 aa).

This is an uncharacterized protein from Archaeoglobus fulgidus (strain ATCC 49558 / DSM 4304 / JCM 9628 / NBRC 100126 / VC-16).